The primary structure comprises 145 residues: CBS domain-containing protein DDB_G0289609 (145 aa).

CBS domains follow at residues M9–E66 and M84–V141.

This chain is CBS domain-containing protein DDB_G0289609, found in Dictyostelium discoideum (Social amoeba).